The following is a 134-amino-acid chain: Small ribosomal subunit protein uS8 (134 aa).

The protein belongs to the universal ribosomal protein uS8 family. In terms of assembly, part of the 30S ribosomal subunit. Contacts proteins S5 and S12.

One of the primary rRNA binding proteins, it binds directly to 16S rRNA central domain where it helps coordinate assembly of the platform of the 30S subunit. The chain is Small ribosomal subunit protein uS8 from Thermosipho melanesiensis (strain DSM 12029 / CIP 104789 / BI429).